The sequence spans 209 residues: Large ribosomal subunit protein uL3 (209 aa).

The tract at residues 127-166 (NFGGGQRTHGQSDRLRAPGSIGGASDPSKTFKGTKMGGRM) is disordered.

It belongs to the universal ribosomal protein uL3 family. As to quaternary structure, part of the 50S ribosomal subunit. Forms a cluster with proteins L14 and L19.

Its function is as follows. One of the primary rRNA binding proteins, it binds directly near the 3'-end of the 23S rRNA, where it nucleates assembly of the 50S subunit. The polypeptide is Large ribosomal subunit protein uL3 (Chlorobium phaeovibrioides (strain DSM 265 / 1930) (Prosthecochloris vibrioformis (strain DSM 265))).